The primary structure comprises 182 residues: MAKDVHVVERVEVPEGVTVSIDGMRVKVSGPKGEVERDFSHARGVLIRLEDNSVVVESFFAKARQRALVGAIAGHIRNMIKGVQGGFRYKLKIMYSHFPINVKVEGDKFIISNFLGEKGLRIARIMPGVKVQVKGSDVIVEGIDVEKVAQTAANIELATKVKDKDRRKFMDGIYIYEREVIA.

The protein belongs to the universal ribosomal protein uL6 family. In terms of assembly, part of the 50S ribosomal subunit.

This protein binds to the 23S rRNA, and is important in its secondary structure. It is located near the subunit interface in the base of the L7/L12 stalk, and near the tRNA binding site of the peptidyltransferase center. The polypeptide is Large ribosomal subunit protein uL6 (Aeropyrum pernix (strain ATCC 700893 / DSM 11879 / JCM 9820 / NBRC 100138 / K1)).